The primary structure comprises 258 residues: Adenylate kinase (258 aa).

An ATP-binding site is contributed by 52–57; sequence GAGKGT. The segment at 72-101 is NMP; it reads ATGDMLRSQVAKKTALGKEAKKIMDQGGLV. AMP contacts are provided by residues T73, R78, 99 to 101, 128 to 131, and Q135; these read GLV and GFPR. An LID region spans residues 169-206; the sequence is GRLVHPASGRSYHKIFNPPKEEMKDDVTGEPLIQRSDD. Residues R170 and 179–180 contribute to the ATP site; that span reads SY. AMP is bound by residues R203 and R214. Q242 lines the ATP pocket.

This sequence belongs to the adenylate kinase family. AK2 subfamily. In terms of assembly, monomer.

The protein resides in the cytoplasm. It is found in the cytosol. It localises to the mitochondrion intermembrane space. The catalysed reaction is AMP + ATP = 2 ADP. Functionally, catalyzes the reversible transfer of the terminal phosphate group between ATP and AMP. Plays an important role in cellular energy homeostasis and in adenine nucleotide metabolism. Adenylate kinase activity is critical for regulation of the phosphate utilization and the AMP de novo biosynthesis pathways. This Aspergillus niger (strain ATCC MYA-4892 / CBS 513.88 / FGSC A1513) protein is Adenylate kinase (adk1).